The sequence spans 96 residues: Small ribosomal subunit protein bS21 (96 aa).

Residues 52–96 form a disordered region; sequence RRARKQARKTAIREGLIAAPKPKARPVSPRRPAAPAPASSPVGAA. The segment covering 69–96 has biased composition (low complexity); that stretch reads AAPKPKARPVSPRRPAAPAPASSPVGAA.

The protein belongs to the bacterial ribosomal protein bS21 family.

In Methylobacterium nodulans (strain LMG 21967 / CNCM I-2342 / ORS 2060), this protein is Small ribosomal subunit protein bS21.